A 1478-amino-acid chain; its full sequence is MPFLRKIAGTAHTHSRSDSNSSVKFGHQPTSSVASTKSSSKSPRATSRKSIYDDIRSQFPNLTPNSTSSQFYESTPVIEQSFNWTTDDHISAGTLENPTSFTNSSYKNDNGPSSLSDSRKSSGGNSVNSLSFDKLILSWDPTDPDEWTMHRVTSWFKFHDFPESWILFFKKHQLFGHRFIKLLAYDNFAVYEKYLPQTKTASYTRFQQLLKKTMTKNVTNSHIRQKSASKLKSSRSSSESIKSKLKNSKSQEDISNSRSTSESALSPTKSGPSKTDEKNFLHSTSTHQKTKSASSLYRRSFISLRGSSSSNASSAKSPSNIKLSIPARPHSIIESNSTLTKSASPPASPSYPSIFRRHHKSSSSESSLLNSLFGSGIGEEAPTKPNPQGHSLSSENLAKGKSKHYETNVSSPLKQSSLPTSDDKGNLWNKFKRKSQIGVPSPNTVAYVTSQETPSLKSNSSTATLTVQTADVNIPSPSSSPPPIPKTANRSLEVISTEDTPKISSTTASFKETYPDCINPDKTVPVPVNNQKYSVKNFLLDQKFYPLKKTGLNDSENKYILVTKDNVSFVPLNLKSVAKLSSFKESALTKLGINHKNVTFHMTDFDCDIGAAIPDDTLEFLKKSLFLNTSGKIYIKDQMKLQQKPKPAPLTSENNVPLKSVKSKSSMRSGTSSLIASTDDVSIVTSSSDITSFDEHASGSGRRYPQTPSYYYDRVSNTNPTEELNYWNIKEVLSHEENAPKMVFKTSPKLELNLPDKGSKLNIPTPITENESKSSFQVLRKDEGTEIDFNHRRESPYTKPELAPKREAPKPPANTSPQRTLSTSKQNKPIRLVRASTKISRSKRSKPLPPQLLSSPIEASSSSPDSLTSSYTPASTHVLIPQPYKGANDVMRRLKTDQDSTSTSPSLKMKQKVNRSNSTVSTSNSIFYSPSPLLKRGNSKRVVSSTSAADIFEENDITFADAPPMFDSDDSDDDSSSSDDIIWSKKKTAPETNNENKKDEKSDNSSTHSDEIFYDSQTQDKMERKMTFRPSPEVVYQNLEKFFPRANLDKPITEGIASPTSPKSLDSLLSPKNVASSRTEPSTPSRPVPPDSSYEFIQDGLNGKNKPLNQAKTPKRTKTIRTIAHEASLARKNSVKLKRQNTKMWGTRMVEVTENHMVSINKAKNSKGEYKEFAWMKGEMIGKGSFGAVYLCLNVTTGEMMAVKQVEVPKYSSQNEAILSTVEALRSEVSTLKDLDHLNIVQYLGFENKNNIYSLFLEYVAGGSVGSLIRMYGRFDEPLIKHLTTQVLKGLAYLHSKGILHRDMKADNLLLDQDGICKISDFGISRKSKDIYSNSDMTMRGTVFWMAPEMVDTKQGYSAKVDIWSLGCIVLEMFAGKRPWSNLEVVAAMFKIGKSKSAPPIPEDTLPLISQIGRNFLDACFEINPEKRPTANELLSHPFSEVNETFNFKSTRLAKFIKSNDKLNSSKLRITSQENKTE.

4 disordered regions span residues 1-70 (MPFL…TSSQ), 99-126 (TSFT…GGNS), 217-359 (NVTN…RRHH), and 373-427 (FGSG…KGNL). The span at 29-49 (PTSSVASTKSSSKSPRATSRK) shows a compositional bias: low complexity. Composition is skewed to polar residues over residues 58 to 70 (QFPN…TSSQ) and 99 to 110 (TSFTNSSYKNDN). Residues 111–126 (GPSSLSDSRKSSGGNS) show a composition bias toward low complexity. Residues 223 to 233 (IRQKSASKLKS) show a composition bias toward basic residues. Polar residues-rich tracts occupy residues 253–273 (DISN…SGPS) and 281–297 (LHST…SSLY). 2 stretches are compositionally biased toward low complexity: residues 298–320 (RRSF…SPSN) and 342–353 (SASPPASPSYPS). 2 stretches are compositionally biased toward polar residues: residues 386–396 (NPQGHSLSSEN) and 407–420 (TNVS…SLPT). T407 is modified (phosphothreonine). Phosphoserine is present on residues S411 and S491. The interval 644–671 (KPKPAPLTSENNVPLKSVKSKSSMRSGT) is disordered. Positions 659–671 (KSVKSKSSMRSGT) are enriched in low complexity. S747 carries the post-translational modification Phosphoserine. 4 disordered regions span residues 752 to 877 (LNLP…ASTH), 895 to 939 (KTDQ…RGNS), 960 to 1021 (ADAP…TQDK), and 1053 to 1116 (TEGI…TPKR). Over residues 765-777 (TPITENESKSSFQ) the composition is skewed to polar residues. Over residues 779 to 809 (LRKDEGTEIDFNHRRESPYTKPELAPKREAP) the composition is skewed to basic and acidic residues. Positions 813-827 (ANTSPQRTLSTSKQN) are enriched in polar residues. S816 carries the post-translational modification Phosphoserine. 2 stretches are compositionally biased toward low complexity: residues 851-870 (QLLS…LTSS) and 914-925 (NRSNSTVSTSNS). Positions 967-977 (DSDDSDDDSSS) are enriched in acidic residues. A compositionally biased stretch (basic and acidic residues) spans 994–1011 (NENKKDEKSDNSSTHSDE). Phosphoserine occurs at positions 1058 and 1061. Residues 1058–1083 (SPTSPKSLDSLLSPKNVASSRTEPST) are compositionally biased toward low complexity. Position 1134 is a phosphoserine; by PKC (S1134). Residues 1175–1440 (WMKGEMIGKG…ANELLSHPFS (266 aa)) enclose the Protein kinase domain. ATP contacts are provided by residues 1181 to 1189 (IGKGSFGAV) and K1204. D1303 functions as the Proton acceptor in the catalytic mechanism.

The protein belongs to the protein kinase superfamily. STE Ser/Thr protein kinase family. MAP kinase kinase kinase subfamily.

It localises to the cytoplasm. It catalyses the reaction L-seryl-[protein] + ATP = O-phospho-L-seryl-[protein] + ADP + H(+). The catalysed reaction is L-threonyl-[protein] + ATP = O-phospho-L-threonyl-[protein] + ADP + H(+). In terms of biological role, serine/threonine protein kinase involved in a signal transduction pathway that plays a role in yeast cell morphogenesis and cell growth. This pathway seems to start by SMP3; then involve the kinase PKC1 that may act on this kinase. BCK1 probably phosphorylates MKK1 and MKK2 which themselves phosphorylate the MPK1 kinase. This chain is Serine/threonine-protein kinase BCK1/SLK1/SSP31 (BCK1), found in Saccharomyces cerevisiae (strain ATCC 204508 / S288c) (Baker's yeast).